A 467-amino-acid polypeptide reads, in one-letter code: Septin-10 (467 aa).

The 267-residue stretch at 63-329 (QGFCFNILCV…ELYRRCKLEE (267 aa)) folds into the Septin-type G domain. The segment at 73–80 (GETGIGKS) is G1 motif. Residues 73–80 (GETGIGKS), glycine 128, 209–217 (KADTVSKTE), glycine 263, and arginine 278 each bind GTP. The G3 motif stretch occupies residues 125-128 (NTVG). A G4 motif region spans residues 208–211 (AKAD).

Belongs to the TRAFAC class TrmE-Era-EngA-EngB-Septin-like GTPase superfamily. Septin GTPase family. As to quaternary structure, septins polymerize into heterooligomeric protein complexes that form filaments, and can associate with cellular membranes, actin filaments and microtubules. GTPase activity is required for filament formation. Interacts with ADGB. Proteolytically cleaved in vitro in a calmodulin-dependent manner.

It is found in the cytoplasm. The protein localises to the cytoskeleton. Its subcellular location is the cell projection. The protein resides in the cilium. It localises to the flagellum. Functionally, filament-forming cytoskeletal GTPase. May play a role in cytokinesis (Potential). In Pongo abelii (Sumatran orangutan), this protein is Septin-10.